We begin with the raw amino-acid sequence, 505 residues long: Lysine--tRNA ligase, heat inducible (505 aa).

An N6-acetyllysine mark is found at Lys-114 and Lys-156. Residues Glu-415 and Glu-422 each coordinate Mg(2+).

It belongs to the class-II aminoacyl-tRNA synthetase family. In terms of assembly, homodimer. Mg(2+) serves as cofactor.

It is found in the cytoplasm. It carries out the reaction tRNA(Lys) + L-lysine + ATP = L-lysyl-tRNA(Lys) + AMP + diphosphate. In Escherichia coli O6:H1 (strain CFT073 / ATCC 700928 / UPEC), this protein is Lysine--tRNA ligase, heat inducible (lysU).